The chain runs to 117 residues: Large ribosomal subunit protein bL20 (117 aa).

It belongs to the bacterial ribosomal protein bL20 family.

In terms of biological role, binds directly to 23S ribosomal RNA and is necessary for the in vitro assembly process of the 50S ribosomal subunit. It is not involved in the protein synthesizing functions of that subunit. The polypeptide is Large ribosomal subunit protein bL20 (Symbiobacterium thermophilum (strain DSM 24528 / JCM 14929 / IAM 14863 / T)).